A 154-amino-acid polypeptide reads, in one-letter code: Large ribosomal subunit protein uL13 (154 aa).

Positions 132-154 (PHEAQQPETLDVGAMNRKNKRAA) are disordered.

The protein belongs to the universal ribosomal protein uL13 family. In terms of assembly, part of the 50S ribosomal subunit.

Its function is as follows. This protein is one of the early assembly proteins of the 50S ribosomal subunit, although it is not seen to bind rRNA by itself. It is important during the early stages of 50S assembly. The sequence is that of Large ribosomal subunit protein uL13 from Rhodopseudomonas palustris (strain HaA2).